A 397-amino-acid chain; its full sequence is ATP-dependent RNA helicase RhlB (397 aa).

The Q motif motif lies at 8 to 36 (TRFHDFNLAPELMHAIQDLGFPYCTPIQA). Residues 39-219 (LGFTLKGKDA…KQWTTDPSIV (181 aa)) form the Helicase ATP-binding domain. ATP is bound at residue 52-59 (AQTGTGKT). Positions 165-168 (DEAD) match the DEAD box motif. Residues 242–392 (DKYKLLYNLV…TPPTHLLRAV (151 aa)) enclose the Helicase C-terminal domain.

The protein belongs to the DEAD box helicase family. RhlB subfamily. As to quaternary structure, component of the RNA degradosome, which is a multiprotein complex involved in RNA processing and mRNA degradation.

The protein localises to the cytoplasm. The enzyme catalyses ATP + H2O = ADP + phosphate + H(+). In terms of biological role, DEAD-box RNA helicase involved in RNA degradation. Has RNA-dependent ATPase activity and unwinds double-stranded RNA. The protein is ATP-dependent RNA helicase RhlB of Pseudomonas syringae pv. tomato (strain ATCC BAA-871 / DC3000).